A 543-amino-acid chain; its full sequence is Phosphatidylinositol/phosphatidylcholine transfer protein SFH12 (543 aa).

In terms of domain architecture, CRAL-TRIO spans 120 to 294 (EIDEVLKYYP…FLGGSCTCAD (175 aa)). A disordered region spans residues 316-356 (HNGDHKCSKGSQAENSGEKTIPEEDDSTTEPASEEEKASKE). The stretch at 490-526 (DKEEMLNAAISRSNVLEQELAATKKALDDSLGRQEEL) forms a coiled coil.

The protein belongs to the SFH family. In terms of tissue distribution, specifically expressed in flowers.

It localises to the golgi apparatus membrane. It is found in the cell membrane. Functionally, required for transport of secretory proteins from the Golgi complex. Catalyzes the transfer of phosphatidylinositol and phosphatidylcholine between membranes in vitro. This Arabidopsis thaliana (Mouse-ear cress) protein is Phosphatidylinositol/phosphatidylcholine transfer protein SFH12 (SFH12).